The chain runs to 458 residues: Probable alpha-L-glutamate ligase (458 aa).

Residues 1–162 (MSDNKFIIGS…YGVKSAKKSG (162 aa)) form a unknown region. The alpha-L-glutamate ligase stretch occupies residues 163-458 (LKIGLLASNP…IEKKLGWKAE (296 aa)). Residues 267-450 (LQLLQKNNLD…IAGAMIDSIE (184 aa)) form the ATP-grasp domain. Residues K304, 341–342 (EF), D350, and 374–376 (RAN) each bind ATP. Mg(2+)-binding residues include D411, E423, and N425. 3 residues coordinate Mn(2+): D411, E423, and N425.

It in the C-terminal section; belongs to the RimK family. Mg(2+) serves as cofactor. Mn(2+) is required as a cofactor.

The sequence is that of Probable alpha-L-glutamate ligase from Shewanella halifaxensis (strain HAW-EB4).